A 273-amino-acid chain; its full sequence is 2,3,4,5-tetrahydropyridine-2,6-dicarboxylate N-succinyltransferase (273 aa).

Positions 104 and 141 each coordinate substrate.

Belongs to the transferase hexapeptide repeat family. Homotrimer.

It localises to the cytoplasm. It catalyses the reaction (S)-2,3,4,5-tetrahydrodipicolinate + succinyl-CoA + H2O = (S)-2-succinylamino-6-oxoheptanedioate + CoA. The protein operates within amino-acid biosynthesis; L-lysine biosynthesis via DAP pathway; LL-2,6-diaminopimelate from (S)-tetrahydrodipicolinate (succinylase route): step 1/3. The protein is 2,3,4,5-tetrahydropyridine-2,6-dicarboxylate N-succinyltransferase of Psychrobacter arcticus (strain DSM 17307 / VKM B-2377 / 273-4).